Consider the following 497-residue polypeptide: Ethanolamine-phosphate phospho-lyase (497 aa).

Lys278 is subject to N6-(pyridoxal phosphate)lysine. Residues 440–497 (TGAETESGISKNTPCRTKMPKEAQSELLRDSSLESRENPSQKRNGLCTDSLLSKRLRT) are disordered. The span at 458–479 (MPKEAQSELLRDSSLESRENPS) shows a compositional bias: basic and acidic residues.

The protein belongs to the class-III pyridoxal-phosphate-dependent aminotransferase family. Homotetramer. Pyridoxal 5'-phosphate serves as cofactor.

It localises to the mitochondrion. It catalyses the reaction phosphoethanolamine + H2O = acetaldehyde + NH4(+) + phosphate. Its function is as follows. Catalyzes the pyridoxal-phosphate-dependent breakdown of phosphoethanolamine, converting it to ammonia, inorganic phosphate and acetaldehyde. This Bos taurus (Bovine) protein is Ethanolamine-phosphate phospho-lyase (ETNPPL).